The sequence spans 467 residues: Xanthan biosynthesis protein XanB (467 aa).

Belongs to the mannose-6-phosphate isomerase type 2 family.

It catalyses the reaction D-mannose 6-phosphate = D-fructose 6-phosphate. The catalysed reaction is alpha-D-mannose 1-phosphate + GTP + H(+) = GDP-alpha-D-mannose + diphosphate. It functions in the pathway nucleotide-sugar biosynthesis; GDP-alpha-D-mannose biosynthesis; GDP-alpha-D-mannose from alpha-D-mannose 1-phosphate (GTP route): step 1/1. The protein operates within nucleotide-sugar biosynthesis; GDP-alpha-D-mannose biosynthesis; alpha-D-mannose 1-phosphate from D-fructose 6-phosphate: step 1/2. Involved in xanthan production. The chain is Xanthan biosynthesis protein XanB (xanB) from Xanthomonas campestris pv. campestris (strain B100).